Consider the following 543-residue polypeptide: Probable E3 ubiquitin-protein ligase ARI9 (543 aa).

The interval 1–26 is disordered; the sequence is MDFSDDDMIDNKSGEENYSYGGGNES. Positions 124–332 are TRIAD supradomain; that stretch reads VNIQCGICFE…RHSGACNRFV (209 aa). Residues Cys-128, Cys-131, Cys-145, His-147, Cys-150, Cys-153, Cys-173, Cys-178, Cys-217, Cys-222, Cys-240, Cys-242, Cys-247, Cys-250, His-255, Cys-260, Cys-287, and Cys-290 each coordinate Zn(2+). An RING-type 1 zinc finger spans residues 128–178; that stretch reads CGICFESYTREEIARVSCGHPYCKTCWAGYITTKIEDGPGCLRVKCPEPSC. Residues 197 to 260 form an IBR-type zinc finger; the sequence is EKYSRYILRS…SEDAHSPVDC (64 aa). An RING-type 2; atypical zinc finger spans residues 287–317; sequence CPECKRPIEKNDGCNHMTCSAPCGHEFCWIC. The active site involves Cys-300. Zn(2+) is bound by residues Cys-305, Cys-309, Cys-314, Cys-317, His-324, and Cys-328.

Belongs to the RBR family. Ariadne subfamily. Requires Zn(2+) as cofactor.

It catalyses the reaction [E2 ubiquitin-conjugating enzyme]-S-ubiquitinyl-L-cysteine + [acceptor protein]-L-lysine = [E2 ubiquitin-conjugating enzyme]-L-cysteine + [acceptor protein]-N(6)-ubiquitinyl-L-lysine.. The protein operates within protein modification; protein ubiquitination. Functionally, might act as an E3 ubiquitin-protein ligase, or as part of E3 complex, which accepts ubiquitin from specific E2 ubiquitin-conjugating enzymes and then transfers it to substrates. The sequence is that of Probable E3 ubiquitin-protein ligase ARI9 (ARI9) from Arabidopsis thaliana (Mouse-ear cress).